The primary structure comprises 477 residues: Mitochondrial adenyl nucleotide antiporter SLC25A24 (477 aa).

Positions 1–173 (MLRWLRDFVL…RFWKHSTGID (173 aa)) are regulatory N-terminal domain. Over 1 to 197 (MLRWLRDFVL…EKKSGQWWRQ (197 aa)) the chain is Mitochondrial intermembrane. EF-hand domains follow at residues 19–54 (EQPT…LGIP), 55–88 (LGQD…KDHE), 86–121 (DHEK…LGLT), and 122–157 (ISEQ…NPVT). The Ca(2+) site is built by Asp32, Asn34, Asp36, Val38, Glu43, Asp68, Asn70, Asp72, Lys74, Glu79, Asp99, Asn101, Asp103, Lys105, Glu110, Asp135, Asp137, Thr139, Thr141, and Glu146. The interval 159–168 (IEEIIRFWKH) is linker region. Residues 174-477 (IGDSLTIPDE…MKQTLGVTQK (304 aa)) are C-terminal transmembrane transporter domain. Solcar repeat units lie at residues 192–278 (GQWW…YKKL), 286–371 (IGTF…LKSY), and 383–471 (PGVM…MKQT). The chain crosses the membrane as a helical span at residues 198 to 215 (LLAGGIAGAVSRTSTAPL). Residues 216–252 (DRLKIMMQVHGSKSDKMNIFGGFRQMVKEGGIRSLWR) are Mitochondrial matrix-facing. A helical transmembrane segment spans residues 253 to 272 (GNGTNVIKIAPETAVKFWAY). Topologically, residues 273-295 (EQYKKLLTEEGQKIGTFERFISG) are mitochondrial intermembrane. Residues 296 to 309 (SMAGATAQTFIYPM) form a helical membrane-spanning segment. The Mitochondrial matrix segment spans residues 310–345 (EVMKTRLAVGKTGQYSGIYDCAKKILKHEGLGAFYK). At Lys320 the chain carries N6-acetyllysine; alternate. Lys320 carries the N6-succinyllysine; alternate modification. At Lys336 the chain carries N6-acetyllysine. Residues 346–365 (GYVPNLLGIIPYAGIDLAVY) form a helical membrane-spanning segment. Residues 366–388 (ELLKSYWLDNFAKDSVNPGVMVL) lie on the Mitochondrial intermembrane side of the membrane. A helical transmembrane segment spans residues 389-406 (LGCGALSSTCGQLASYPL). Residues 407–445 (ALVRTRMQAQAMLEGSPQLNMVGLFRRIISKEGIPGLYR) lie on the Mitochondrial matrix side of the membrane. The residue at position 437 (Lys437) is an N6-acetyllysine; alternate. An N6-succinyllysine; alternate modification is found at Lys437. A helical transmembrane segment spans residues 446 to 465 (GITPNFMKVLPAVGISYVVY). At 466-477 (ENMKQTLGVTQK) the chain is on the mitochondrial intermembrane side.

The protein belongs to the mitochondrial carrier (TC 2.A.29) family. Monomer. As to expression, expressed in all tissues tested. Highly expressed in testis, expressed at intermediate level in small intestine and pancreas, and weakly expressed in kidney, spleen, liver, skeletal muscle and heart.

The protein localises to the mitochondrion inner membrane. The enzyme catalyses Mg(2+)(out) + phosphate(in) + ATP(out) = Mg(2+)(in) + phosphate(out) + ATP(in). It carries out the reaction ADP(out) + phosphate(in) + H(+)(out) = ADP(in) + phosphate(out) + H(+)(in). The catalysed reaction is AMP(out) + phosphate(in) = AMP(in) + phosphate(out). It catalyses the reaction phosphate(in) + ATP(out) + 2 H(+)(out) = phosphate(out) + ATP(in) + 2 H(+)(in). The enzyme catalyses dADP(in) + ADP(out) = dADP(out) + ADP(in). It carries out the reaction Mg(2+)(in) + ADP(out) + ATP(in) + H(+)(out) = Mg(2+)(out) + ADP(in) + ATP(out) + H(+)(in). The catalysed reaction is ADP(out) + diphosphate(in) = ADP(in) + diphosphate(out). It catalyses the reaction dAMP(in) + ADP(out) + H(+)(out) = dAMP(out) + ADP(in) + H(+)(in). The enzyme catalyses 3'-AMP(in) + ADP(out) + H(+)(out) = 3'-AMP(out) + ADP(in) + H(+)(in). It carries out the reaction dAMP(out) + phosphate(in) = dAMP(in) + phosphate(out). The catalysed reaction is 3'-AMP(out) + phosphate(in) = 3'-AMP(in) + phosphate(out). It catalyses the reaction dADP(out) + phosphate(in) + H(+)(out) = dADP(in) + phosphate(out) + H(+)(in). Activated by an increase in cytosolic calcium levels that induce a conformational change of the N-terminal regulatory domain, uncapping the channel and allowing transport. Inhibited by bathophenanthroline, mersalyl, p-hydroxymercuribenzoate, bromcresol purple and tannic acid. Functionally, electroneutral antiporter that mediates the transport of adenyl nucleotides through the inner mitochondrial membrane. Originally identified as an ATP-magnesium/inorganic phosphate antiporter, it also acts as a broad specificity adenyl nucleotide antiporter. By regulating the mitochondrial matrix adenyl nucleotide pool could adapt to changing cellular energetic demands and indirectly regulate adenyl nucleotide-dependent metabolic pathways. In vitro, a low activity is also observed with guanyl and pyrimidine nucleotides. May play a role in protecting cells against oxidative stress-induced cell death, by buffering calcium levels in the mitochondrial matrix through the formation of calcium-phosphate precipitates. The protein is Mitochondrial adenyl nucleotide antiporter SLC25A24 of Homo sapiens (Human).